The following is a 258-amino-acid chain: Imidazole glycerol phosphate synthase subunit HisF (258 aa).

Active-site residues include Asp-11 and Asp-130.

Belongs to the HisA/HisF family. As to quaternary structure, heterodimer of HisH and HisF.

The protein localises to the cytoplasm. It carries out the reaction 5-[(5-phospho-1-deoxy-D-ribulos-1-ylimino)methylamino]-1-(5-phospho-beta-D-ribosyl)imidazole-4-carboxamide + L-glutamine = D-erythro-1-(imidazol-4-yl)glycerol 3-phosphate + 5-amino-1-(5-phospho-beta-D-ribosyl)imidazole-4-carboxamide + L-glutamate + H(+). The protein operates within amino-acid biosynthesis; L-histidine biosynthesis; L-histidine from 5-phospho-alpha-D-ribose 1-diphosphate: step 5/9. Its function is as follows. IGPS catalyzes the conversion of PRFAR and glutamine to IGP, AICAR and glutamate. The HisF subunit catalyzes the cyclization activity that produces IGP and AICAR from PRFAR using the ammonia provided by the HisH subunit. This is Imidazole glycerol phosphate synthase subunit HisF from Shigella flexneri serotype 5b (strain 8401).